A 74-amino-acid polypeptide reads, in one-letter code: MARVTVEDCLENVDNRFELVMVASKRARQLATGGEDAKVPLEGDKVTVVALREIAENLINAKNVDQQKRPLHEF.

It belongs to the RNA polymerase subunit omega family. As to quaternary structure, the RNAP catalytic core consists of 2 alpha, 1 beta, 1 beta' and 1 omega subunit. When a sigma factor is associated with the core the holoenzyme is formed, which can initiate transcription.

The catalysed reaction is RNA(n) + a ribonucleoside 5'-triphosphate = RNA(n+1) + diphosphate. Its function is as follows. Promotes RNA polymerase assembly. Latches the N- and C-terminal regions of the beta' subunit thereby facilitating its interaction with the beta and alpha subunits. In Marinomonas sp. (strain MWYL1), this protein is DNA-directed RNA polymerase subunit omega.